The primary structure comprises 594 residues: DNA ligase (594 aa).

NAD(+) contacts are provided by residues 32-36 (DEEYD), 81-82 (SL), and Glu-118. The N6-AMP-lysine intermediate role is filled by Lys-120. Positions 141, 181, 299, and 323 each coordinate NAD(+). The Zn(2+) site is built by Cys-417, Cys-420, Cys-436, and Cys-442.

The protein belongs to the NAD-dependent DNA ligase family. LigA subfamily. It depends on Mg(2+) as a cofactor. Requires Mn(2+) as cofactor.

It catalyses the reaction NAD(+) + (deoxyribonucleotide)n-3'-hydroxyl + 5'-phospho-(deoxyribonucleotide)m = (deoxyribonucleotide)n+m + AMP + beta-nicotinamide D-nucleotide.. DNA ligase that catalyzes the formation of phosphodiester linkages between 5'-phosphoryl and 3'-hydroxyl groups in double-stranded DNA using NAD as a coenzyme and as the energy source for the reaction. It is essential for DNA replication and repair of damaged DNA. This is DNA ligase from Blochmanniella floridana.